The chain runs to 400 residues: Imidazolonepropionase (400 aa).

Residues H70 and H72 each coordinate Fe(3+). Residues H70 and H72 each coordinate Zn(2+). 4-imidazolone-5-propanoate contacts are provided by R79, Y142, and H175. Residue Y142 participates in N-formimidoyl-L-glutamate binding. H239 contributes to the Fe(3+) binding site. Zn(2+) is bound at residue H239. Residue Q242 coordinates 4-imidazolone-5-propanoate. D314 contributes to the Fe(3+) binding site. Residue D314 coordinates Zn(2+). Residues N316 and G318 each coordinate N-formimidoyl-L-glutamate. T319 contributes to the 4-imidazolone-5-propanoate binding site.

This sequence belongs to the metallo-dependent hydrolases superfamily. HutI family. It depends on Zn(2+) as a cofactor. Fe(3+) is required as a cofactor.

The protein localises to the cytoplasm. The catalysed reaction is 4-imidazolone-5-propanoate + H2O = N-formimidoyl-L-glutamate. It participates in amino-acid degradation; L-histidine degradation into L-glutamate; N-formimidoyl-L-glutamate from L-histidine: step 3/3. Functionally, catalyzes the hydrolytic cleavage of the carbon-nitrogen bond in imidazolone-5-propanoate to yield N-formimidoyl-L-glutamate. It is the third step in the universal histidine degradation pathway. In Methylobacterium nodulans (strain LMG 21967 / CNCM I-2342 / ORS 2060), this protein is Imidazolonepropionase.